A 382-amino-acid polypeptide reads, in one-letter code: Mannitol-1-phosphate 5-dehydrogenase (382 aa).

Residue alanine 3–glycine 14 participates in NAD(+) binding.

This sequence belongs to the mannitol dehydrogenase family.

It catalyses the reaction D-mannitol 1-phosphate + NAD(+) = beta-D-fructose 6-phosphate + NADH + H(+). The protein is Mannitol-1-phosphate 5-dehydrogenase of Erwinia tasmaniensis (strain DSM 17950 / CFBP 7177 / CIP 109463 / NCPPB 4357 / Et1/99).